The sequence spans 249 residues: Indole-3-glycerol phosphate synthase (249 aa).

This sequence belongs to the TrpC family.

The catalysed reaction is 1-(2-carboxyphenylamino)-1-deoxy-D-ribulose 5-phosphate + H(+) = (1S,2R)-1-C-(indol-3-yl)glycerol 3-phosphate + CO2 + H2O. The protein operates within amino-acid biosynthesis; L-tryptophan biosynthesis; L-tryptophan from chorismate: step 4/5. This Pyrobaculum aerophilum (strain ATCC 51768 / DSM 7523 / JCM 9630 / CIP 104966 / NBRC 100827 / IM2) protein is Indole-3-glycerol phosphate synthase.